The chain runs to 310 residues: Ribosomal RNA small subunit methyltransferase H (310 aa).

S-adenosyl-L-methionine is bound by residues 47–49 (GGH), Asp66, Phe93, Asp108, and Gln115.

It belongs to the methyltransferase superfamily. RsmH family.

The protein localises to the cytoplasm. It carries out the reaction cytidine(1402) in 16S rRNA + S-adenosyl-L-methionine = N(4)-methylcytidine(1402) in 16S rRNA + S-adenosyl-L-homocysteine + H(+). Functionally, specifically methylates the N4 position of cytidine in position 1402 (C1402) of 16S rRNA. The protein is Ribosomal RNA small subunit methyltransferase H of Prochlorococcus marinus (strain MIT 9303).